The primary structure comprises 496 residues: Angiopoietin-2 (496 aa).

The N-terminal stretch at 1 to 18 (MWQLVFLTLSCDLAVATA) is a signal peptide. N-linked (GlcNAc...) asparagine glycans are attached at residues asparagine 90, asparagine 120, asparagine 134, asparagine 152, asparagine 241, and asparagine 304. A coiled-coil region spans residues 167–249 (STNKLEKQIL…VNNSVLQKQQ (83 aa)). A Fibrinogen C-terminal domain is found at 275-495 (KDEQIIFRDC…ATTMMIRPAD (221 aa)). Cysteine 284 and cysteine 313 form a disulfide bridge. Ca(2+)-binding residues include aspartate 429, aspartate 431, cysteine 433, and cysteine 435. Intrachain disulfides connect cysteine 433–cysteine 435 and cysteine 437–cysteine 450.

As to quaternary structure, interacts with TEK/TIE2, competing for the same binding site as ANGPT1. Interacts with ITGA5. Interacts with SVEP1/polydom. Interacts with THBD; this interaction significantly inhibits the generation of activated PC and TAFIa/CPB2 by the thrombin/thrombomodulin complex.

It localises to the secreted. Binds to TEK/TIE2, competing for the ANGPT1 binding site, and modulating ANGPT1 signaling. Can induce tyrosine phosphorylation of TEK/TIE2 in the absence of ANGPT1. In the absence of angiogenic inducers, such as VEGF, ANGPT2-mediated loosening of cell-matrix contacts may induce endothelial cell apoptosis with consequent vascular regression. In concert with VEGF, it may facilitate endothelial cell migration and proliferation, thus serving as a permissive angiogenic signal. Involved in the regulation of lymphangiogenesis. This is Angiopoietin-2 (ANGPT2) from Bos taurus (Bovine).